A 615-amino-acid chain; its full sequence is Pentatricopeptide repeat-containing protein At2g25580 (615 aa).

Residues Phe40–Ser98 are disordered. Over residues Arg58 to Ser98 the composition is skewed to polar residues. PPR repeat units lie at residues Asp288–Lys318, Asn319–Pro353, Asp354–Pro389, and Ser390–Glu420. The segment at Ser490–Val520 is type E(+) motif. Residues Glu521–Trp615 form a type DYW motif region.

The protein belongs to the PPR family. PCMP-H subfamily.

In Arabidopsis thaliana (Mouse-ear cress), this protein is Pentatricopeptide repeat-containing protein At2g25580 (PCMP-H75).